Reading from the N-terminus, the 144-residue chain is Large ribosomal subunit protein uL24 (144 aa).

A disordered region spans residues 1–22 (MKFNKMVSSDRGKNRKRHFNAP). Basic residues predominate over residues 13–22 (KNRKRHFNAP).

The protein belongs to the universal ribosomal protein uL24 family.

The sequence is that of Large ribosomal subunit protein uL24 (RPL26) from Littorina littorea (Common periwinkle).